The primary structure comprises 708 residues: B-cell lymphoma 6 protein homolog (708 aa).

Residues Thr-32 to Glu-99 enclose the BTB domain. The segment covering Ala-303–Gln-317 has biased composition (basic and acidic residues). 2 disordered regions span residues Ala-303–Thr-371 and Pro-431–Leu-470. Polar residues-rich tracts occupy residues Ser-333–Pro-370 and Pro-431–Asn-454. C2H2-type zinc fingers lie at residues Phe-520 to His-543, Tyr-548 to His-570, Tyr-576 to His-598, Tyr-604 to His-626, Tyr-632 to His-654, and Tyr-660 to His-683.

It is found in the nucleus. In terms of biological role, transcriptional repressor mainly required for germinal center (GC) formation and antibody affinity maturation which has different mechanisms of action specific to the lineage and biological functions. Forms complexes with different corepressors and histone deacetylases to repress the transcriptional expression of different subsets of target genes. Represses its target genes by binding directly to the DNA sequence 5'-TTCCTAGAA-3' (BCL6-binding site) or indirectly by repressing the transcriptional activity of transcription factors. In GC B-cells, represses genes that function in differentiation, inflammation, apoptosis and cell cycle control, also autoregulates its transcriptional expression and up-regulates, indirectly, the expression of some genes important for GC reactions, such as AICDA, through the repression of microRNAs expression. An important function is to allow GC B-cells to proliferate very rapidly in response to T-cell dependent antigens and tolerate the physiological DNA breaks required for immunglobulin class switch recombination and somatic hypermutation without inducing a p53/TP53-dependent apoptotic response. In follicular helper CD4(+) T-cells (T(FH) cells), promotes the expression of T(FH)-related genes but inhibits the differentiation of T(H)1, T(H)2 and T(H)17 cells. Also required for the establishment and maintenance of immunological memory for both T- and B-cells. Suppresses macrophage proliferation through competition with STAT5 for STAT-binding motifs binding on certain target genes, such as CCL2 and CCND2. In response to genotoxic stress, controls cell cycle arrest in GC B-cells in both p53/TP53-dependedent and -independent manners. Besides, also controls neurogenesis through the alteration of the composition of NOTCH-dependent transcriptional complexes at selective NOTCH targets, such as HES5, including the recruitment of the deacetylase SIRT1 and resulting in an epigenetic silencing leading to neuronal differentiation. In Gallus gallus (Chicken), this protein is B-cell lymphoma 6 protein homolog.